Consider the following 237-residue polypeptide: U2 small nuclear ribonucleoprotein A' (237 aa).

3 LRR repeats span residues 53–74 (RTNI…GHND), 75–95 (TVHT…SRLP), and 97–118 (YLVN…QGLR). The 39-residue stretch at 132 to 170 (NVICHKEQYRETVIALCPQLAVLDGERVRQAERQAAPQN) folds into the LRRCT domain. The interval 161-182 (QAERQAAPQNEKTDTPTEGPQP) is disordered.

Belongs to the U2 small nuclear ribonucleoprotein A family. Associated with the spliceosome.

It is found in the nucleus. Involved in pre-mRNA splicing. This Eremothecium gossypii (strain ATCC 10895 / CBS 109.51 / FGSC 9923 / NRRL Y-1056) (Yeast) protein is U2 small nuclear ribonucleoprotein A' (LEA1).